A 495-amino-acid chain; its full sequence is Keratin, type II cuticular 87 (495 aa).

Positions M1–E111 are head. An IF rod domain is found at E111–L422. The tract at residues K112 to Y146 is coil 1A. Residues Q147–M156 are linker 1. Positions E157–S257 are coil 1B. Residues H258 to L274 form a linker 12 region. A coil 2 region spans residues N275–E418. Residues E419–F494 are tail.

It belongs to the intermediate filament family. Heterotetramer of two type I and two type II keratins.

In Mus musculus (Mouse), this protein is Keratin, type II cuticular 87.